The primary structure comprises 784 residues: Cation/H(+) antiporter 26 (784 aa).

11 helical membrane-spanning segments follow: residues Pro38–Leu58, Leu61–Leu81, Tyr97–Ala117, Leu130–Cys150, Leu201–Ile221, Phe240–Ile260, Thr286–Val306, Ile321–Val341, Ile351–Leu371, Phe376–Tyr396, and Glu413–Val433.

This sequence belongs to the monovalent cation:proton antiporter 2 (CPA2) transporter (TC 2.A.37) family. CHX (TC 2.A.37.4) subfamily. As to expression, expressed in pollen.

Its subcellular location is the membrane. Its function is as follows. May operate as a cation/H(+) antiporter. The protein is Cation/H(+) antiporter 26 (CHX26) of Arabidopsis thaliana (Mouse-ear cress).